The chain runs to 211 residues: MTQQYNYHMTRFIISAPDIRHLATDSGIEVAFAGRSNAGKSSALNTLTNQKNLARTSKTPGRTQLINLFEVTDGVRLVDLPGYGYAEVPEQMKIKWQRALGEYLQKRNSLKGLVVLMDIRHPLKDLDQQMIQWAVDVELPVLVLLTKADKLASGARKAQLNMVREAVLPFMGDIQVEAFSSLKKLGVDKLRQKLDNWFSTLEHAEEEQEAE.

The EngB-type G domain maps to 26–200 (SGIEVAFAGR…RQKLDNWFST (175 aa)). Residues 34–41 (GRSNAGKS), 61–65 (GRTQL), 79–82 (DLPG), 146–149 (TKAD), and 179–181 (FSS) each bind GTP. 2 residues coordinate Mg(2+): Ser41 and Thr63.

It belongs to the TRAFAC class TrmE-Era-EngA-EngB-Septin-like GTPase superfamily. EngB GTPase family. Mg(2+) serves as cofactor.

In terms of biological role, necessary for normal cell division and for the maintenance of normal septation. This chain is Probable GTP-binding protein EngB, found in Pectobacterium carotovorum subsp. carotovorum (strain PC1).